Consider the following 337-residue polypeptide: DNA-directed RNA polymerase subunit alpha (337 aa).

Residues 1–233 (MIQKNWQELI…DQLSIFVNFE (233 aa)) form an alpha N-terminal domain (alpha-NTD) region. Residues 249–337 (FNPALLKKVD…DLAKRYEDQY (89 aa)) form an alpha C-terminal domain (alpha-CTD) region.

This sequence belongs to the RNA polymerase alpha chain family. In terms of assembly, homodimer. The RNAP catalytic core consists of 2 alpha, 1 beta, 1 beta' and 1 omega subunit. When a sigma factor is associated with the core the holoenzyme is formed, which can initiate transcription.

It catalyses the reaction RNA(n) + a ribonucleoside 5'-triphosphate = RNA(n+1) + diphosphate. Functionally, DNA-dependent RNA polymerase catalyzes the transcription of DNA into RNA using the four ribonucleoside triphosphates as substrates. This is DNA-directed RNA polymerase subunit alpha from Brucella suis (strain ATCC 23445 / NCTC 10510).